The chain runs to 488 residues: Ribulose bisphosphate carboxylase large chain (488 aa).

Substrate-binding residues include N127 and T177. The active-site Proton acceptor is K179. Substrate is bound at residue K181. The Mg(2+) site is built by K205, D207, and E208. N6-carboxylysine is present on K205. H297 (proton acceptor) is an active-site residue. Residues R298, H330, and S382 each contribute to the substrate site.

The protein belongs to the RuBisCO large chain family. Type I subfamily. In terms of assembly, heterohexadecamer of 8 large chains and 8 small chains. Mg(2+) is required as a cofactor.

The protein localises to the plastid. It localises to the chloroplast. It carries out the reaction 2 (2R)-3-phosphoglycerate + 2 H(+) = D-ribulose 1,5-bisphosphate + CO2 + H2O. The catalysed reaction is D-ribulose 1,5-bisphosphate + O2 = 2-phosphoglycolate + (2R)-3-phosphoglycerate + 2 H(+). RuBisCO catalyzes two reactions: the carboxylation of D-ribulose 1,5-bisphosphate, the primary event in carbon dioxide fixation, as well as the oxidative fragmentation of the pentose substrate in the photorespiration process. Both reactions occur simultaneously and in competition at the same active site. The polypeptide is Ribulose bisphosphate carboxylase large chain (rbcL) (Pyropia haitanensis (Red seaweed)).